The following is a 199-amino-acid chain: Imidazoleglycerol-phosphate dehydratase (199 aa).

The protein belongs to the imidazoleglycerol-phosphate dehydratase family.

It is found in the cytoplasm. It carries out the reaction D-erythro-1-(imidazol-4-yl)glycerol 3-phosphate = 3-(imidazol-4-yl)-2-oxopropyl phosphate + H2O. It functions in the pathway amino-acid biosynthesis; L-histidine biosynthesis; L-histidine from 5-phospho-alpha-D-ribose 1-diphosphate: step 6/9. The chain is Imidazoleglycerol-phosphate dehydratase from Methylibium petroleiphilum (strain ATCC BAA-1232 / LMG 22953 / PM1).